The following is a 590-amino-acid chain: UvrABC system protein C (590 aa).

Positions 15 to 92 (DLPGCYMMKD…IQKHKPYYNI (78 aa)) constitute a GIY-YIG domain. The region spanning 197–232 (SKIKKELEQKMETASENLEFERAAEIRDQIHYVEMT) is the UVR domain.

It belongs to the UvrC family. As to quaternary structure, interacts with UvrB in an incision complex.

The protein localises to the cytoplasm. In terms of biological role, the UvrABC repair system catalyzes the recognition and processing of DNA lesions. UvrC both incises the 5' and 3' sides of the lesion. The N-terminal half is responsible for the 3' incision and the C-terminal half is responsible for the 5' incision. In Ligilactobacillus salivarius (strain UCC118) (Lactobacillus salivarius), this protein is UvrABC system protein C.